A 418-amino-acid polypeptide reads, in one-letter code: MTLLALGINHKTAPVSLRERVTFSPDTLDQALDSLLAQPMVQGGVVLSTCNRTELYLSVEEQDNLQEALIRWLCDYHNLNEDDLRNSLYWHQDNDAVSHLMRVASGLDSLVLGEPQILGQVKKAFADSQKGHLNASALERMFQKSFSVAKRVRTETDIGASAVSVAFAACTLARQIFESLSTVTVLLVGAGETIELVARHLREHKVQKMIIANRTRERAQALADEVGAEVISLSDIDARLQDADIIISSTASPLPIIGKGMVERALKSRRNQPMLLVDIAVPRDVEPEVGKLANAYLYSVDDLQSIISHNLVQRQAAAVEAETIVEQEASEFMAWLRAQGASETIREYRSQSEQIRDELTTKALSALQQGGDAQAILQDLAWKLTNRLIHAPTKSLQQAARDGDDERLNILRDSLGLE.

Substrate is bound by residues threonine 49–arginine 52, serine 109, glutamate 114–glutamine 116, and glutamine 120. The active-site Nucleophile is the cysteine 50. Glycine 189–isoleucine 194 is an NADP(+) binding site.

This sequence belongs to the glutamyl-tRNA reductase family. As to quaternary structure, homodimer.

The enzyme catalyses (S)-4-amino-5-oxopentanoate + tRNA(Glu) + NADP(+) = L-glutamyl-tRNA(Glu) + NADPH + H(+). Its pathway is porphyrin-containing compound metabolism; protoporphyrin-IX biosynthesis; 5-aminolevulinate from L-glutamyl-tRNA(Glu): step 1/2. In terms of biological role, catalyzes the NADPH-dependent reduction of glutamyl-tRNA(Glu) to glutamate 1-semialdehyde (GSA). The sequence is that of Glutamyl-tRNA reductase from Salmonella choleraesuis (strain SC-B67).